We begin with the raw amino-acid sequence, 322 residues long: uncharacterized protein (322 aa).

Positions 1-27 (MKRLFWNLKHKKAWLVLLLGTGMILSS) are cleaved as a signal peptide. The N-palmitoyl cysteine moiety is linked to residue Cys28. Cys28 carries S-diacylglycerol cysteine lipidation. Positions 235–254 (DNSTNPNAPGSGQGDSTPPA) are enriched in polar residues. Residues 235-298 (DNSTNPNAPG…AVQRSQKSYG (64 aa)) form a disordered region. Positions 257-267 (GEGGGSDGSSG) are enriched in gly residues. The span at 274 to 296 (NGQNTTPTSPQSSQPAVQRSQKS) shows a compositional bias: polar residues.

The protein localises to the cell membrane. This is an uncharacterized protein from Mycoplasma genitalium (strain ATCC 33530 / DSM 19775 / NCTC 10195 / G37) (Mycoplasmoides genitalium).